We begin with the raw amino-acid sequence, 347 residues long: GMP reductase (347 aa).

108 to 131 (ADFQKTKDIMALTEDLIFICIDIA) is an NADP(+) binding site. Residues Gly181 and Gly183 each contribute to the K(+) site. Cys186 serves as the catalytic Thioimidate intermediate. Position 216–239 (216–239 (IIGDGGCSCAGDVSKAFGGGADFV)) interacts with NADP(+).

Belongs to the IMPDH/GMPR family. GuaC type 1 subfamily. As to quaternary structure, homotetramer.

It catalyses the reaction IMP + NH4(+) + NADP(+) = GMP + NADPH + 2 H(+). In terms of biological role, catalyzes the irreversible NADPH-dependent deamination of GMP to IMP. It functions in the conversion of nucleobase, nucleoside and nucleotide derivatives of G to A nucleotides, and in maintaining the intracellular balance of A and G nucleotides. The protein is GMP reductase of Photobacterium profundum (strain SS9).